The following is a 517-amino-acid chain: 2,3-bisphosphoglycerate-independent phosphoglycerate mutase 1 (517 aa).

The Mn(2+) site is built by Asp17 and Ser67. Ser67 serves as the catalytic Phosphoserine intermediate. Substrate contacts are provided by residues His128, 158–159 (RD), Arg190, Arg196, 267–270 (RPDR), and Lys340. Residues Asp407, His411, Asp448, His449, and His467 each contribute to the Mn(2+) site.

The protein belongs to the BPG-independent phosphoglycerate mutase family. Mn(2+) serves as cofactor.

It carries out the reaction (2R)-2-phosphoglycerate = (2R)-3-phosphoglycerate. It participates in carbohydrate degradation; glycolysis; pyruvate from D-glyceraldehyde 3-phosphate: step 3/5. In terms of biological role, catalyzes the interconversion of 2-phosphoglycerate and 3-phosphoglycerate. This is 2,3-bisphosphoglycerate-independent phosphoglycerate mutase 1 from Methanosarcina barkeri (strain Fusaro / DSM 804).